The sequence spans 244 residues: Ribonuclease 3 (244 aa).

One can recognise an RNase III domain in the interval 5 to 136; it reads LAELERAIGI…LVGAIYLDQG (132 aa). Position 49 (Glu49) interacts with Mg(2+). The active site involves Asp53. Mg(2+) is bound by residues Asp122 and Glu125. The active site involves Glu125. The DRBM domain maps to 161 to 229; the sequence is DPTTRLQELM…ARKALAAWDK (69 aa).

Belongs to the ribonuclease III family. As to quaternary structure, homodimer. Mg(2+) is required as a cofactor.

It localises to the cytoplasm. It catalyses the reaction Endonucleolytic cleavage to 5'-phosphomonoester.. Functionally, digests double-stranded RNA. Involved in the processing of primary rRNA transcript to yield the immediate precursors to the large and small rRNAs (23S and 16S). Processes some mRNAs, and tRNAs when they are encoded in the rRNA operon. Processes pre-crRNA and tracrRNA of type II CRISPR loci if present in the organism. This chain is Ribonuclease 3, found in Chloroflexus aurantiacus (strain ATCC 29364 / DSM 637 / Y-400-fl).